A 197-amino-acid polypeptide reads, in one-letter code: Imidazoleglycerol-phosphate dehydratase (197 aa).

This sequence belongs to the imidazoleglycerol-phosphate dehydratase family.

It localises to the cytoplasm. The catalysed reaction is D-erythro-1-(imidazol-4-yl)glycerol 3-phosphate = 3-(imidazol-4-yl)-2-oxopropyl phosphate + H2O. It functions in the pathway amino-acid biosynthesis; L-histidine biosynthesis; L-histidine from 5-phospho-alpha-D-ribose 1-diphosphate: step 6/9. The polypeptide is Imidazoleglycerol-phosphate dehydratase (Methylocella silvestris (strain DSM 15510 / CIP 108128 / LMG 27833 / NCIMB 13906 / BL2)).